A 198-amino-acid chain; its full sequence is uncharacterized protein (198 aa).

To A.aeolicus aq_1211 and aq_1583.

This is an uncharacterized protein from Aquifex aeolicus (strain VF5).